Here is a 67-residue protein sequence, read N- to C-terminus: Beta-defensin 123 (67 aa).

The N-terminal stretch at 1–20 (MKLLLLTLTVLLLLSQLTPG) is a signal peptide. Disulfide bonds link Cys25–Cys52, Cys32–Cys46, and Cys36–Cys53.

It belongs to the beta-defensin family. In terms of tissue distribution, abundant expression in the male reproductive tract only. Expressed abundantly in testis, while expression in epididymis decreased gradually from caput to cauda.

It is found in the secreted. Functionally, has antibacterial activity. This is Beta-defensin 123 (DEFB123) from Macaca mulatta (Rhesus macaque).